We begin with the raw amino-acid sequence, 677 residues long: DNA ligase (677 aa).

NAD(+) contacts are provided by residues 35–39 (DAVYD), 84–85 (SL), and E115. Residue K117 is the N6-AMP-lysine intermediate of the active site. Residues R138, E177, K296, and K320 each contribute to the NAD(+) site. Zn(2+) is bound by residues C414, C417, C432, and C437. Residues 599–677 (NGILKLNGKT…ETQLLEILEE (79 aa)) form the BRCT domain.

This sequence belongs to the NAD-dependent DNA ligase family. LigA subfamily. The cofactor is Mg(2+). Mn(2+) is required as a cofactor.

The catalysed reaction is NAD(+) + (deoxyribonucleotide)n-3'-hydroxyl + 5'-phospho-(deoxyribonucleotide)m = (deoxyribonucleotide)n+m + AMP + beta-nicotinamide D-nucleotide.. In terms of biological role, DNA ligase that catalyzes the formation of phosphodiester linkages between 5'-phosphoryl and 3'-hydroxyl groups in double-stranded DNA using NAD as a coenzyme and as the energy source for the reaction. It is essential for DNA replication and repair of damaged DNA. This is DNA ligase from Nostoc sp. (strain PCC 7120 / SAG 25.82 / UTEX 2576).